We begin with the raw amino-acid sequence, 91 residues long: DNA-directed RNA polymerase subunit omega (91 aa).

Belongs to the RNA polymerase subunit omega family. As to quaternary structure, the RNAP catalytic core consists of 2 alpha, 1 beta, 1 beta' and 1 omega subunit. When a sigma factor is associated with the core the holoenzyme is formed, which can initiate transcription.

It carries out the reaction RNA(n) + a ribonucleoside 5'-triphosphate = RNA(n+1) + diphosphate. Functionally, promotes RNA polymerase assembly. Latches the N- and C-terminal regions of the beta' subunit thereby facilitating its interaction with the beta and alpha subunits. The sequence is that of DNA-directed RNA polymerase subunit omega from Aeromonas hydrophila subsp. hydrophila (strain ATCC 7966 / DSM 30187 / BCRC 13018 / CCUG 14551 / JCM 1027 / KCTC 2358 / NCIMB 9240 / NCTC 8049).